Reading from the N-terminus, the 199-residue chain is Thymidine kinase (199 aa).

ATP-binding positions include 9-16 and 93-96; these read GAMSSGKT and DEAQ. E94 (proton acceptor) is an active-site residue. Zn(2+) contacts are provided by C151, C154, C188, and H191.

The protein belongs to the thymidine kinase family. In terms of assembly, homotetramer.

Its subcellular location is the cytoplasm. It catalyses the reaction thymidine + ATP = dTMP + ADP + H(+). In Lactobacillus acidophilus (strain ATCC 700396 / NCK56 / N2 / NCFM), this protein is Thymidine kinase.